A 339-amino-acid polypeptide reads, in one-letter code: Biotin synthase (339 aa).

One can recognise a Radical SAM core domain in the interval 55–282 (NAVQLSTLLS…KAVVRLSAGR (228 aa)). The [4Fe-4S] cluster site is built by Cys-70, Cys-74, and Cys-77. Positions 114, 145, 205, and 277 each coordinate [2Fe-2S] cluster.

Belongs to the radical SAM superfamily. Biotin synthase family. In terms of assembly, homodimer. [4Fe-4S] cluster serves as cofactor. It depends on [2Fe-2S] cluster as a cofactor.

The enzyme catalyses (4R,5S)-dethiobiotin + (sulfur carrier)-SH + 2 reduced [2Fe-2S]-[ferredoxin] + 2 S-adenosyl-L-methionine = (sulfur carrier)-H + biotin + 2 5'-deoxyadenosine + 2 L-methionine + 2 oxidized [2Fe-2S]-[ferredoxin]. It participates in cofactor biosynthesis; biotin biosynthesis; biotin from 7,8-diaminononanoate: step 2/2. Functionally, catalyzes the conversion of dethiobiotin (DTB) to biotin by the insertion of a sulfur atom into dethiobiotin via a radical-based mechanism. The chain is Biotin synthase from Burkholderia orbicola (strain MC0-3).